The primary structure comprises 496 residues: Anaerobic nitric oxide reductase flavorubredoxin (496 aa).

Residues 30–210 (TKGTSYNSYL…PFSALVTAKI (181 aa)) form a zinc metallo-hydrolase region. Positions 79, 81, 83, 147, 166, and 227 each coordinate Fe cation. One can recognise a Flavodoxin-like domain in the interval 254 to 393 (ITIFYDSMSN…LCREHGQFIA (140 aa)). FMN-binding positions include 260 to 264 (SMSNN) and 342 to 369 (AFGSYGWNGGAVDRIHSRLTDAGFETAV). The Rubredoxin-like domain occupies 444–495 (KQCMLCSVCNWVYDPEIGEPNQGVEPNTPWSSVPNDFLCPECHLGKDVFVEI). Fe cation-binding residues include Cys449, Cys452, Cys482, and Cys485.

The protein in the N-terminal section; belongs to the zinc metallo-hydrolase group 3 family. In terms of assembly, homotetramer. The cofactor is Fe cation. FMN serves as cofactor.

The protein localises to the cytoplasm. The protein operates within nitrogen metabolism; nitric oxide reduction. In terms of biological role, anaerobic nitric oxide reductase; uses NADH to detoxify nitric oxide (NO), protecting several 4Fe-4S NO-sensitive enzymes. Has at least 2 reductase partners, only one of which (NorW, flavorubredoxin reductase) has been identified. NO probably binds to the di-iron center; electrons enter from the NorW at rubredoxin and are transferred sequentially to the FMN center and the di-iron center. Also able to function as an aerobic oxygen reductase. The protein is Anaerobic nitric oxide reductase flavorubredoxin of Aliivibrio fischeri (strain ATCC 700601 / ES114) (Vibrio fischeri).